The following is a 106-amino-acid chain: Iron-sulfur cluster assembly protein CyaY (106 aa).

This sequence belongs to the frataxin family.

In terms of biological role, involved in iron-sulfur (Fe-S) cluster assembly. May act as a regulator of Fe-S biogenesis. The protein is Iron-sulfur cluster assembly protein CyaY of Pectobacterium carotovorum subsp. carotovorum (strain PC1).